The following is a 167-amino-acid chain: SsrA-binding protein (167 aa).

The span at 139-158 (QNHDKRDAAKDRDWQRDKQR) shows a compositional bias: basic and acidic residues. Positions 139–167 (QNHDKRDAAKDRDWQRDKQRVMRRHNRDA) are disordered.

The protein belongs to the SmpB family.

It localises to the cytoplasm. Required for rescue of stalled ribosomes mediated by trans-translation. Binds to transfer-messenger RNA (tmRNA), required for stable association of tmRNA with ribosomes. tmRNA and SmpB together mimic tRNA shape, replacing the anticodon stem-loop with SmpB. tmRNA is encoded by the ssrA gene; the 2 termini fold to resemble tRNA(Ala) and it encodes a 'tag peptide', a short internal open reading frame. During trans-translation Ala-aminoacylated tmRNA acts like a tRNA, entering the A-site of stalled ribosomes, displacing the stalled mRNA. The ribosome then switches to translate the ORF on the tmRNA; the nascent peptide is terminated with the 'tag peptide' encoded by the tmRNA and targeted for degradation. The ribosome is freed to recommence translation, which seems to be the essential function of trans-translation. This Xanthomonas axonopodis pv. citri (strain 306) protein is SsrA-binding protein.